A 189-amino-acid polypeptide reads, in one-letter code: Molybdopterin synthase catalytic subunit (189 aa).

Residues 1-30 (MSSLEISNSCFSPETRSPSSRQSVEDNASE) are compositionally biased toward polar residues. The interval 1-41 (MSSLEISNSCFSPETRSPSSRQSVEDNASEPSGKDVDDVQE) is disordered. At S20 the chain carries Phosphoserine. Over residues 32–41 (SGKDVDDVQE) the composition is skewed to basic and acidic residues. Substrate-binding positions include 143–144 (HR), K159, and 166–168 (KKE).

Belongs to the MoaE family. MOCS2B subfamily. In terms of assembly, heterotetramer; composed of 2 small (MOCS2A) and 2 large (MOCS2B) subunits.

The protein resides in the cytoplasm. It localises to the cytosol. The enzyme catalyses 2 [molybdopterin-synthase sulfur-carrier protein]-C-terminal-Gly-aminoethanethioate + cyclic pyranopterin phosphate + H2O = molybdopterin + 2 [molybdopterin-synthase sulfur-carrier protein]-C-terminal Gly-Gly + 2 H(+). Its pathway is cofactor biosynthesis; molybdopterin biosynthesis. Catalytic subunit of the molybdopterin synthase complex, a complex that catalyzes the conversion of precursor Z into molybdopterin. Acts by mediating the incorporation of 2 sulfur atoms from thiocarboxylated MOCS2A into precursor Z to generate a dithiolene group. The protein is Molybdopterin synthase catalytic subunit of Mus musculus (Mouse).